The chain runs to 329 residues: uncharacterized protein (329 aa).

9 helical membrane-spanning segments follow: residues Asn5–Val24, Ile34–Phe56, Phe92–Gly114, Ile124–Tyr146, Ser159–Leu181, Thr196–Leu218, Phe231–Tyr253, Leu263–Gly285, and Phe306–Thr328.

The protein localises to the cell membrane. This is an uncharacterized protein from Archaeoglobus fulgidus (strain ATCC 49558 / DSM 4304 / JCM 9628 / NBRC 100126 / VC-16).